The primary structure comprises 449 residues: Allantoinase (449 aa).

Residues H61, H63, K148, H184, H240, and D313 each coordinate Zn(2+). N6-carboxylysine is present on K148.

Belongs to the metallo-dependent hydrolases superfamily. Allantoinase family. Homotetramer. The cofactor is Zn(2+). Post-translationally, carboxylation allows a single lysine to coordinate two zinc ions.

The catalysed reaction is (S)-allantoin + H2O = allantoate + H(+). Its pathway is nitrogen metabolism; (S)-allantoin degradation; allantoate from (S)-allantoin: step 1/1. In terms of biological role, catalyzes the conversion of allantoin (5-ureidohydantoin) to allantoic acid by hydrolytic cleavage of the five-member hydantoin ring. The sequence is that of Allantoinase from Desulfitobacterium hafniense (strain Y51).